Consider the following 332-residue polypeptide: T-cell surface glycoprotein CD1c2 (332 aa).

An N-terminal signal peptide occupies residues 1-17 (MLFLQFLFVDVVLGGSI). Residues 18–300 (TENVVQENIS…IILYWGHGLS (283 aa)) are Extracellular-facing. N-linked (GlcNAc...) asparagine glycosylation is found at Asn25, Asn38, and Asn75. Disulfide bonds link Cys120/Cys184 and Cys224/Cys279. Positions 205–292 (PEVWLSSSPN…HSSLRDQDII (88 aa)) constitute an Ig-like domain. The chain crosses the membrane as a helical span at residues 301–321 (VILIALAVIVPLVLLIVLVLL). The Cytoplasmic segment spans residues 322 to 332 (CKKRCTYQGIP).

In terms of assembly, heterodimer with B2M (beta-2-microglobulin).

It localises to the cell membrane. The protein resides in the endosome membrane. Functionally, antigen-presenting protein that binds self and non-self lipid and glycolipid antigens and presents them to T-cell receptors on natural killer T-cells. This is T-cell surface glycoprotein CD1c2 (CD1C2) from Cavia porcellus (Guinea pig).